The chain runs to 510 residues: ATP synthase subunit alpha (510 aa).

Residue 169–176 (GDRQTGKT) coordinates ATP.

This sequence belongs to the ATPase alpha/beta chains family. F-type ATPases have 2 components, CF(1) - the catalytic core - and CF(0) - the membrane proton channel. CF(1) has five subunits: alpha(3), beta(3), gamma(1), delta(1), epsilon(1). CF(0) has three main subunits: a(1), b(2) and c(9-12). The alpha and beta chains form an alternating ring which encloses part of the gamma chain. CF(1) is attached to CF(0) by a central stalk formed by the gamma and epsilon chains, while a peripheral stalk is formed by the delta and b chains.

It localises to the cell inner membrane. The catalysed reaction is ATP + H2O + 4 H(+)(in) = ADP + phosphate + 5 H(+)(out). Its function is as follows. Produces ATP from ADP in the presence of a proton gradient across the membrane. The alpha chain is a regulatory subunit. In Rickettsia felis (strain ATCC VR-1525 / URRWXCal2) (Rickettsia azadi), this protein is ATP synthase subunit alpha.